The following is a 236-amino-acid chain: Glyoxalase 3 (236 aa).

Residues C136, H137, and E168 contribute to the active site. At C136 the chain carries Cysteine sulfinic acid (-SO2H).

This sequence belongs to the peptidase C56 family. HSP31-like subfamily. In terms of assembly, monomer.

The enzyme catalyses methylglyoxal + H2O = (R)-lactate + H(+). Catalyzes the conversion of methylglyoxal (MG) to D-lactate in a single glutathione (GSH)-independent step. Selective for MG, does not use glyoxal as substrate. Plays a role in detoxifying endogenously produced MG, particularly when glycerol is the principal carbon source. Important for viability in stationary phase. This is Glyoxalase 3 from Candida albicans (strain SC5314 / ATCC MYA-2876) (Yeast).